The chain runs to 498 residues: Flagellin (498 aa).

This sequence belongs to the bacterial flagellin family.

It is found in the secreted. It localises to the bacterial flagellum. In terms of biological role, flagellin is the subunit protein which polymerizes to form the filaments of bacterial flagella. The sequence is that of Flagellin (fliC) from Escherichia coli (strain K12).